The following is a 64-amino-acid chain: Putative isoleucine--tRNA ligase (64 aa).

The protein belongs to the class-I aminoacyl-tRNA synthetase family. In terms of assembly, member of a complex that includes annexin.

The enzyme catalyses tRNA(Ile) + L-isoleucine + ATP = L-isoleucyl-tRNA(Ile) + AMP + diphosphate. In Physarum polycephalum (Slime mold), this protein is Putative isoleucine--tRNA ligase.